The sequence spans 580 residues: Arginine--tRNA ligase (580 aa).

A 'HIGH' region motif is present at residues 131–141 (ANPTGPMHVGH).

This sequence belongs to the class-I aminoacyl-tRNA synthetase family. Monomer.

It localises to the cytoplasm. The enzyme catalyses tRNA(Arg) + L-arginine + ATP = L-arginyl-tRNA(Arg) + AMP + diphosphate. The polypeptide is Arginine--tRNA ligase (Cereibacter sphaeroides (strain ATCC 17025 / ATH 2.4.3) (Rhodobacter sphaeroides)).